Here is a 514-residue protein sequence, read N- to C-terminus: Peptide chain release factor 3 (514 aa).

Residues 8 to 268 (KKRRTFAIIS…TFLEFAPEPH (261 aa)) form the tr-type G domain. Residues 17 to 24 (SHPDAGKT), 85 to 89 (DTPGH), and 139 to 142 (NKLD) contribute to the GTP site.

This sequence belongs to the TRAFAC class translation factor GTPase superfamily. Classic translation factor GTPase family. PrfC subfamily.

It is found in the cytoplasm. Its function is as follows. Increases the formation of ribosomal termination complexes and stimulates activities of RF-1 and RF-2. It binds guanine nucleotides and has strong preference for UGA stop codons. It may interact directly with the ribosome. The stimulation of RF-1 and RF-2 is significantly reduced by GTP and GDP, but not by GMP. This is Peptide chain release factor 3 from Streptococcus agalactiae serotype Ia (strain ATCC 27591 / A909 / CDC SS700).